Here is a 455-residue protein sequence, read N- to C-terminus: Glutamyl-tRNA reductase (455 aa).

Substrate is bound by residues 49-52 (TCNR), Ser-109, 114-116 (ETQ), and Gln-120. Cys-50 acts as the Nucleophile in catalysis. 189–194 (GAGKMG) contacts NADP(+).

The protein belongs to the glutamyl-tRNA reductase family. As to quaternary structure, homodimer.

The enzyme catalyses (S)-4-amino-5-oxopentanoate + tRNA(Glu) + NADP(+) = L-glutamyl-tRNA(Glu) + NADPH + H(+). The protein operates within porphyrin-containing compound metabolism; protoporphyrin-IX biosynthesis; 5-aminolevulinate from L-glutamyl-tRNA(Glu): step 1/2. Its function is as follows. Catalyzes the NADPH-dependent reduction of glutamyl-tRNA(Glu) to glutamate 1-semialdehyde (GSA). The sequence is that of Glutamyl-tRNA reductase from Bacillus velezensis (strain DSM 23117 / BGSC 10A6 / LMG 26770 / FZB42) (Bacillus amyloliquefaciens subsp. plantarum).